Reading from the N-terminus, the 606-residue chain is Peptide-N(4)-(N-acetyl-beta-glucosaminyl)asparagine amidase (606 aa).

Residues 2 to 108 enclose the Thioredoxin domain; sequence PVTEVGSLPE…IAEKIRQHYS (107 aa). C191, C194, C225, and C228 together coordinate Zn(2+). Residue C251 is the Nucleophile of the active site. Residues H278 and D295 contribute to the active site. The 203-residue stretch at 404–606 folds into the PAW domain; the sequence is DLGGRITGSE…SFSVKIWMKN (203 aa).

The protein belongs to the transglutaminase-like superfamily. PNGase family. Requires Zn(2+) as cofactor.

It is found in the cytoplasm. It localises to the endoplasmic reticulum. The enzyme catalyses Hydrolysis of an N(4)-(acetyl-beta-D-glucosaminyl)asparagine residue in which the glucosamine residue may be further glycosylated, to yield a (substituted) N-acetyl-beta-D-glucosaminylamine and a peptide containing an aspartate residue.. Inhibited by Zn(2+) and z-VAD-fmk (caspase inhibitor) but unaffected by EDTA. Functionally, specifically deglycosylates the denatured form of N-linked glycoproteins in the cytoplasm and assists their proteasome-mediated degradation. Cleaves the beta-aspartyl-glucosamine (GlcNAc) of the glycan and the amide side chain of Asn, converting Asn to Asp. Prefers proteins containing high-mannose over those bearing complex type oligosaccharides. Can recognize misfolded proteins in the endoplasmic reticulum that are exported to the cytosol to be destroyed and deglycosylate them, while it has no activity toward native proteins. Deglycosylation is a prerequisite for subsequent proteasome-mediated degradation of some, but not all, misfolded glycoproteins. Also displays oxidoreductase (thioredoxin) activity. Involved in regulating the expression of proteasomal subunits such as rpt-3 in order to confer resistance to proteasomal dysfunction. The sequence is that of Peptide-N(4)-(N-acetyl-beta-glucosaminyl)asparagine amidase (png-1) from Caenorhabditis elegans.